A 355-amino-acid polypeptide reads, in one-letter code: CRAL-TRIO domain-containing protein C365.01 (355 aa).

In terms of domain architecture, CRAL-TRIO spans 93-260; sequence ENGLNQNFVK…SMHGQFDETK (168 aa).

This is CRAL-TRIO domain-containing protein C365.01 from Schizosaccharomyces pombe (strain 972 / ATCC 24843) (Fission yeast).